A 525-amino-acid polypeptide reads, in one-letter code: NAD(P)H-quinone oxidoreductase subunit 2 (525 aa).

The next 14 helical transmembrane spans lie at 14–34 (AIWPEVVVTLTLLIVLVVDLV), 42–62 (SLPALSLFGLLGALVTLVLQW), 78–98 (PVSILFRGLVVATAALTVMMA), 117–137 (LTATLGGMFLAGATDLIMVFV), 167–187 (LLTGASSTAIFLYGMSLLYGL), 201–221 (LANAGLVGILALVFCLGGIGF), 240–260 (PTPVVAFLSVGSKAAGFALAI), 276–296 (AVLSVLAILTMVLGNVVAIAQ), 302–322 (LLAYSSIGQAGFVLIGLVAGT), 330–350 (IFYLMVYLAMNLGAFLCVTLF), 374–394 (LCLSICLLSLGGLPPLAGFFG), 396–416 (LYLFWAGWQAGEYTLVLVGLV), 462–482 (VGMVVTLVATIFAGILSNPLF), and 494–514 (FLGFPTAQAFAPGSASPSLAV).

It belongs to the complex I subunit 2 family. NDH-1 can be composed of about 15 different subunits; different subcomplexes with different compositions have been identified which probably have different functions.

The protein resides in the cellular thylakoid membrane. The catalysed reaction is a plastoquinone + NADH + (n+1) H(+)(in) = a plastoquinol + NAD(+) + n H(+)(out). The enzyme catalyses a plastoquinone + NADPH + (n+1) H(+)(in) = a plastoquinol + NADP(+) + n H(+)(out). In terms of biological role, NDH-1 shuttles electrons from an unknown electron donor, via FMN and iron-sulfur (Fe-S) centers, to quinones in the respiratory and/or the photosynthetic chain. The immediate electron acceptor for the enzyme in this species is believed to be plastoquinone. Couples the redox reaction to proton translocation, and thus conserves the redox energy in a proton gradient. Cyanobacterial NDH-1 also plays a role in inorganic carbon-concentration. This chain is NAD(P)H-quinone oxidoreductase subunit 2, found in Synechococcus sp. (strain JA-3-3Ab) (Cyanobacteria bacterium Yellowstone A-Prime).